Here is a 344-residue protein sequence, read N- to C-terminus: Inositol 2-dehydrogenase/D-chiro-inositol 3-dehydrogenase (344 aa).

It belongs to the Gfo/Idh/MocA family. In terms of assembly, homotetramer.

The catalysed reaction is myo-inositol + NAD(+) = scyllo-inosose + NADH + H(+). It carries out the reaction 1D-chiro-inositol + NAD(+) = scyllo-inosine + NADH + H(+). The protein operates within polyol metabolism; myo-inositol degradation into acetyl-CoA; acetyl-CoA from myo-inositol: step 1/7. Involved in the oxidation of myo-inositol (MI) and D-chiro-inositol (DCI) to 2-keto-myo-inositol (2KMI or 2-inosose) and 1-keto-D-chiro-inositol (1KDCI), respectively. The sequence is that of Inositol 2-dehydrogenase/D-chiro-inositol 3-dehydrogenase from Bacillus velezensis (strain DSM 23117 / BGSC 10A6 / LMG 26770 / FZB42) (Bacillus amyloliquefaciens subsp. plantarum).